Consider the following 419-residue polypeptide: Tol-Pal system protein TolB (419 aa).

The signal sequence occupies residues 1-19 (MFNRIISLFLLLFTGQVIA).

It belongs to the TolB family. In terms of assembly, the Tol-Pal system is composed of five core proteins: the inner membrane proteins TolA, TolQ and TolR, the periplasmic protein TolB and the outer membrane protein Pal. They form a network linking the inner and outer membranes and the peptidoglycan layer.

It localises to the periplasm. Part of the Tol-Pal system, which plays a role in outer membrane invagination during cell division and is important for maintaining outer membrane integrity. This Legionella pneumophila (strain Corby) protein is Tol-Pal system protein TolB.